A 180-amino-acid polypeptide reads, in one-letter code: UPF0743 protein C215.06c (180 aa).

C2HC LYAR-type zinc fingers lie at residues 1 to 26 and 27 to 51; these read MVSF…SRCH and GAYF…TSCM. Positions 6, 9, 21, 25, 32, 35, 47, and 50 each coordinate Zn(2+). Residues 61–125 form a disordered region; sequence LYRPTKKELK…KETVSSPAEQ (65 aa). The segment covering 77 to 95 has biased composition (polar residues); the sequence is NAVNSKELSPNTDNQNTPA. Serine 85 carries the phosphoserine modification. Residues 100–111 show a composition bias toward basic and acidic residues; that stretch reads HSLDENEKDKEN.

It belongs to the UPF0743 family.

It localises to the nucleus. This chain is UPF0743 protein C215.06c, found in Schizosaccharomyces pombe (strain 972 / ATCC 24843) (Fission yeast).